Consider the following 60-residue polypeptide: Large ribosomal subunit protein uL30 (60 aa).

Belongs to the universal ribosomal protein uL30 family. Part of the 50S ribosomal subunit.

In Streptococcus mutans serotype c (strain ATCC 700610 / UA159), this protein is Large ribosomal subunit protein uL30.